Consider the following 664-residue polypeptide: Phosphomethylpyrimidine synthase (664 aa).

Polar residues-rich tracts occupy residues 1–10 (MSTEPLSINP) and 17–27 (SATQEPSTSSK). The disordered stretch occupies residues 1–37 (MSTEPLSINPLSAKPLSATQEPSTSSKPSRREQRAAA). Substrate-binding positions include N261, M290, Y319, H355, 375–377 (SRG), 416–419 (DGLR), and E455. H459 provides a ligand contact to Zn(2+). A substrate-binding site is contributed by Y482. H523 lines the Zn(2+) pocket. The [4Fe-4S] cluster site is built by C603, C606, and C611.

Belongs to the ThiC family. In terms of assembly, homodimer. [4Fe-4S] cluster is required as a cofactor.

It catalyses the reaction 5-amino-1-(5-phospho-beta-D-ribosyl)imidazole + S-adenosyl-L-methionine = 4-amino-2-methyl-5-(phosphooxymethyl)pyrimidine + CO + 5'-deoxyadenosine + formate + L-methionine + 3 H(+). It participates in cofactor biosynthesis; thiamine diphosphate biosynthesis. Functionally, catalyzes the synthesis of the hydroxymethylpyrimidine phosphate (HMP-P) moiety of thiamine from aminoimidazole ribotide (AIR) in a radical S-adenosyl-L-methionine (SAM)-dependent reaction. The chain is Phosphomethylpyrimidine synthase from Pectobacterium atrosepticum (strain SCRI 1043 / ATCC BAA-672) (Erwinia carotovora subsp. atroseptica).